A 141-amino-acid chain; its full sequence is NADH dehydrogenase [ubiquinone] 1 alpha subcomplex subunit 11 (141 aa).

2 helical membrane-spanning segments follow: residues 21–43 (KTYI…RVSL) and 58–80 (RYTF…SAQV).

This sequence belongs to the complex I NDUFA11 subunit family. Complex I is composed of 45 different subunits.

The protein localises to the mitochondrion inner membrane. In terms of biological role, accessory subunit of the mitochondrial membrane respiratory chain NADH dehydrogenase (Complex I), that is believed not to be involved in catalysis. Complex I functions in the transfer of electrons from NADH to the respiratory chain. The immediate electron acceptor for the enzyme is believed to be ubiquinone. The protein is NADH dehydrogenase [ubiquinone] 1 alpha subcomplex subunit 11 (Ndufa11) of Mus musculus (Mouse).